A 277-amino-acid chain; its full sequence is Xyloglucan endotransglucosylase/hydrolase protein 19 (277 aa).

The first 21 residues, 1 to 21 (MKSFTFLILFLFAAQSISVYA), serve as a signal peptide directing secretion. Residues 22–213 (GSFHKDVKIH…WSKAPFTAYY (192 aa)) enclose the GH16 domain. Residue Glu99 is the Nucleophile of the active site. The active-site Proton donor is Glu103. Xyloglucan is bound at residue Glu103. A glycan (N-linked (GlcNAc...) asparagine) is linked at Asn107. Residues 116-118 (HTN), 126-128 (DKE), 192-193 (HW), and Gly197 contribute to the xyloglucan site. Cystine bridges form between Cys221-Cys230 and Cys262-Cys276. Xyloglucan is bound at residue Arg267.

Belongs to the glycosyl hydrolase 16 family. XTH group 2 subfamily. In terms of processing, contains at least one intrachain disulfide bond essential for its enzymatic activity. As to expression, root specific.

The protein localises to the secreted. It is found in the cell wall. It localises to the extracellular space. Its subcellular location is the apoplast. The catalysed reaction is breaks a beta-(1-&gt;4) bond in the backbone of a xyloglucan and transfers the xyloglucanyl segment on to O-4 of the non-reducing terminal glucose residue of an acceptor, which can be a xyloglucan or an oligosaccharide of xyloglucan.. Possesses xyloglucan endotransglucosylase (XET) activity in vitro. Does not possess xyloglucan endohydrolysis (XEH) activity. Cleaves and religates xyloglucan polymers, an essential constituent of the primary cell wall, and thereby participates in cell wall construction of growing tissues. Involved in cell proliferation in the tissue reunion process of wounded inflorescence stems. Maybe a downstream target of NAC071 as a consequence of auxin action in wounded stems. This Arabidopsis thaliana (Mouse-ear cress) protein is Xyloglucan endotransglucosylase/hydrolase protein 19.